The primary structure comprises 420 residues: Mitochondrial chaperone BCS1 (420 aa).

The Mitochondrial intermembrane portion of the chain corresponds to 1–15 (MTLSDFIGALKDNPY). Residues 16 to 32 (FGAGFGLVGVGTALAVA) form a helical membrane-spanning segment. Topologically, residues 33-420 (RKGAQVGMIF…AIKNIAEIKD (388 aa)) are mitochondrial matrix. ATP is bound at residue 230 to 237 (GPPGCGKS).

The protein belongs to the AAA ATPase family. BCS1 subfamily.

The protein localises to the mitochondrion inner membrane. The enzyme catalyses ATP + H2O = ADP + phosphate + H(+). Its function is as follows. Chaperone necessary for the incorporation of Rieske iron-sulfur protein uqcrfs1 into the mitochondrial respiratory chain complex III. This is Mitochondrial chaperone BCS1 (bcs1l) from Danio rerio (Zebrafish).